A 191-amino-acid chain; its full sequence is MSRLFLPVLAIVLVSIGASHTASLEWPSNLVALSSVKSSQLLPIASEDSVELADGSSGSVSSSAAQPEDQSQEEAEEQQVSSASSGSADPISGRLVSAGIPVSVPLPLILAARNGLRTVLTIQEPAVAKVGEVVQHVPTAVSHQTQTVVHDHRRLVTPIVAPAVRTTQVIRQQPPLLWSVASDPRVVLIRN.

Positions 1-21 are cleaved as a signal peptide; that stretch reads MSRLFLPVLAIVLVSIGASHT. Positions 52 to 88 are disordered; sequence LADGSSGSVSSSAAQPEDQSQEEAEEQQVSSASSGSA. 2 stretches are compositionally biased toward low complexity: residues 55–69 and 78–88; these read GSSGSVSSSAAQPED and QQVSSASSGSA.

Post-translationally, phosphorylated. Specifically expressed in cornea (at protein level). Detected in retina and cortex.

The protein resides in the secreted. This Drosophila melanogaster (Fruit fly) protein is Retinin.